Reading from the N-terminus, the 263-residue chain is 3'-5' ssDNA/RNA exonuclease TatD (263 aa).

Positions 91, 127, and 152 each coordinate a divalent metal cation.

It belongs to the metallo-dependent hydrolases superfamily. TatD-type hydrolase family. TatD subfamily. Monomer. It depends on Mg(2+) as a cofactor.

The protein resides in the cytoplasm. 3'-5' exonuclease that prefers single-stranded DNA and RNA. May play a role in the H(2)O(2)-induced DNA damage repair. This Cronobacter sakazakii (strain ATCC BAA-894) (Enterobacter sakazakii) protein is 3'-5' ssDNA/RNA exonuclease TatD.